Consider the following 597-residue polypeptide: tRNA uridine 5-carboxymethylaminomethyl modification enzyme MnmG (597 aa).

Residue 10 to 15 (GGGHAG) participates in FAD binding. 267-281 (GPRYCPSIEDKVVRF) contacts NAD(+).

It belongs to the MnmG family. In terms of assembly, homodimer. Heterotetramer of two MnmE and two MnmG subunits. It depends on FAD as a cofactor.

The protein resides in the cytoplasm. Its function is as follows. NAD-binding protein involved in the addition of a carboxymethylaminomethyl (cmnm) group at the wobble position (U34) of certain tRNAs, forming tRNA-cmnm(5)s(2)U34. This Thermus thermophilus (strain ATCC 27634 / DSM 579 / HB8) protein is tRNA uridine 5-carboxymethylaminomethyl modification enzyme MnmG.